Here is a 256-residue protein sequence, read N- to C-terminus: Thiazole synthase (256 aa).

Lys95 serves as the catalytic Schiff-base intermediate with DXP. Residues Gly156, 182–183 (AG), and 204–205 (NT) each bind 1-deoxy-D-xylulose 5-phosphate.

Belongs to the ThiG family. As to quaternary structure, homotetramer. Forms heterodimers with either ThiH or ThiS.

It localises to the cytoplasm. The catalysed reaction is [ThiS sulfur-carrier protein]-C-terminal-Gly-aminoethanethioate + 2-iminoacetate + 1-deoxy-D-xylulose 5-phosphate = [ThiS sulfur-carrier protein]-C-terminal Gly-Gly + 2-[(2R,5Z)-2-carboxy-4-methylthiazol-5(2H)-ylidene]ethyl phosphate + 2 H2O + H(+). It participates in cofactor biosynthesis; thiamine diphosphate biosynthesis. In terms of biological role, catalyzes the rearrangement of 1-deoxy-D-xylulose 5-phosphate (DXP) to produce the thiazole phosphate moiety of thiamine. Sulfur is provided by the thiocarboxylate moiety of the carrier protein ThiS. In vitro, sulfur can be provided by H(2)S. In Klebsiella pneumoniae subsp. pneumoniae (strain ATCC 700721 / MGH 78578), this protein is Thiazole synthase.